A 138-amino-acid polypeptide reads, in one-letter code: ATP synthase epsilon chain (138 aa).

Belongs to the ATPase epsilon chain family. F-type ATPases have 2 components, CF(1) - the catalytic core - and CF(0) - the membrane proton channel. CF(1) has five subunits: alpha(3), beta(3), gamma(1), delta(1), epsilon(1). CF(0) has three main subunits: a, b and c.

The protein resides in the cell inner membrane. Its function is as follows. Produces ATP from ADP in the presence of a proton gradient across the membrane. This chain is ATP synthase epsilon chain, found in Psychrobacter sp. (strain PRwf-1).